The following is a 470-amino-acid chain: UDP-N-acetylmuramate--L-alanine ligase (470 aa).

118–124 (GTHGKTT) is a binding site for ATP.

It belongs to the MurCDEF family.

The protein resides in the cytoplasm. The enzyme catalyses UDP-N-acetyl-alpha-D-muramate + L-alanine + ATP = UDP-N-acetyl-alpha-D-muramoyl-L-alanine + ADP + phosphate + H(+). The protein operates within cell wall biogenesis; peptidoglycan biosynthesis. In terms of biological role, cell wall formation. The chain is UDP-N-acetylmuramate--L-alanine ligase from Cereibacter sphaeroides (strain ATCC 17025 / ATH 2.4.3) (Rhodobacter sphaeroides).